The following is a 333-amino-acid chain: L-lactate dehydrogenase (333 aa).

Residues 29-57 (GQVG…VADK) and Arg99 contribute to the NAD(+) site. Arg106, Asn138, and Arg169 together coordinate substrate. Asn138 is an NAD(+) binding site. His193 functions as the Proton acceptor in the catalytic mechanism. Position 249 (Thr249) interacts with substrate.

This sequence belongs to the LDH/MDH superfamily. LDH family. Homotetramer.

The protein localises to the cytoplasm. It carries out the reaction (S)-lactate + NAD(+) = pyruvate + NADH + H(+). It functions in the pathway fermentation; pyruvate fermentation to lactate; (S)-lactate from pyruvate: step 1/1. The sequence is that of L-lactate dehydrogenase (ldh-1) from Caenorhabditis elegans.